Reading from the N-terminus, the 109-residue chain is Putative polyketide cyclase (109 aa).

This sequence to polyketide cyclases.

Functionally, involved in developmentally regulated synthesis of a compound biosynthetically related to polyketide antibiotics which is essential for spore color in Streptomyces halstedii. This is Putative polyketide cyclase (sch4) from Streptomyces halstedii.